We begin with the raw amino-acid sequence, 346 residues long: DNA-directed RNA polymerase subunit alpha (346 aa).

An alpha N-terminal domain (alpha-NTD) region spans residues 1-242 (MLIQDGDKLI…DQLSVFINFD (242 aa)). Residues 258-346 (LNPNLFKSID…WLKRKEKNEA (89 aa)) form an alpha C-terminal domain (alpha-CTD) region.

This sequence belongs to the RNA polymerase alpha chain family. In terms of assembly, homodimer. The RNAP catalytic core consists of 2 alpha, 1 beta, 1 beta' and 1 omega subunit. When a sigma factor is associated with the core the holoenzyme is formed, which can initiate transcription.

The catalysed reaction is RNA(n) + a ribonucleoside 5'-triphosphate = RNA(n+1) + diphosphate. In terms of biological role, DNA-dependent RNA polymerase catalyzes the transcription of DNA into RNA using the four ribonucleoside triphosphates as substrates. This chain is DNA-directed RNA polymerase subunit alpha, found in Maridesulfovibrio salexigens (strain ATCC 14822 / DSM 2638 / NCIMB 8403 / VKM B-1763) (Desulfovibrio salexigens).